We begin with the raw amino-acid sequence, 205 residues long: Proteasome subunit beta type-3 (205 aa).

It belongs to the peptidase T1B family. As to quaternary structure, the 26S proteasome consists of a 20S proteasome core and two 19S regulatory subunits. The 20S proteasome core is composed of 28 subunits that are arranged in four stacked rings, resulting in a barrel-shaped structure. The two end rings are each formed by seven alpha subunits, and the two central rings are each formed by seven beta subunits. The catalytic chamber with the active sites is on the inside of the barrel.

The protein localises to the cytoplasm. It is found in the nucleus. Its function is as follows. Non-catalytic component of the proteasome, a multicatalytic proteinase complex which is characterized by its ability to cleave peptides with Arg, Phe, Tyr, Leu, and Glu adjacent to the leaving group at neutral or slightly basic pH. The proteasome has an ATP-dependent proteolytic activity. This is Proteasome subunit beta type-3 (psmb3) from Oncorhynchus mykiss (Rainbow trout).